Here is a 176-residue protein sequence, read N- to C-terminus: Envelope protein 167 (176 aa).

A topological domain (intravirion) is located at residue M1. The chain crosses the membrane as a helical span at residues 2 to 22; that stretch reads YLVLLIAIILFITIILVIFLI. Residues 23-176 lie on the Virion surface side of the membrane; the sequence is SGLFYPEQNP…AVMAIPRKVL (154 aa).

It belongs to the asfivirus envelope protein p22 family.

The protein localises to the virion membrane. It is found in the host cell membrane. This is Envelope protein 167 from African swine fever virus (isolate Warthog/Namibia/Wart80/1980) (ASFV).